Reading from the N-terminus, the 372-residue chain is sn-glycerol-3-phosphate import ATP-binding protein UgpC (372 aa).

In terms of domain architecture, ABC transporter spans 2-233 (LDIKQLVKTY…PASTFVASFI (232 aa)). 35–42 (GPSGCGKS) contacts ATP.

The protein belongs to the ABC transporter superfamily. sn-glycerol-3-phosphate importer (TC 3.A.1.1.3) family. As to quaternary structure, the complex is composed of two ATP-binding proteins (UgpC), two transmembrane proteins (UgpA and UgpE) and a solute-binding protein (UgpB).

Its subcellular location is the cell inner membrane. The catalysed reaction is sn-glycerol 3-phosphate(out) + ATP + H2O = sn-glycerol 3-phosphate(in) + ADP + phosphate + H(+). Its function is as follows. Part of the ABC transporter complex UgpBAEC involved in sn-glycerol-3-phosphate (G3P) import. Responsible for energy coupling to the transport system. The chain is sn-glycerol-3-phosphate import ATP-binding protein UgpC from Vibrio cholerae serotype O1 (strain ATCC 39315 / El Tor Inaba N16961).